The sequence spans 152 residues: Transcriptional regulator MraZ (152 aa).

2 SpoVT-AbrB domains span residues 5-52 (ATLV…PLPE) and 81-124 (ASEC…DETT).

The protein belongs to the MraZ family. Forms oligomers.

It localises to the cytoplasm. The protein localises to the nucleoid. Negatively regulates its own expression and that of the subsequent genes in the proximal part of the division and cell wall (dcw) gene cluster. Acts by binding directly to DNA. May also regulate the expression of genes outside the dcw cluster. In Klebsiella pneumoniae (strain 342), this protein is Transcriptional regulator MraZ.